Here is a 272-residue protein sequence, read N- to C-terminus: Large ribosomal subunit protein uL2 (272 aa).

Residues 222–272 (GVAMNPIDHPLGGGEGKSSGGRAACTPWGKPEGVKTRKNKRTDKFIIKRRK) form a disordered region. Basic and acidic residues predominate over residues 263–272 (TDKFIIKRRK).

It belongs to the universal ribosomal protein uL2 family. Part of the 50S ribosomal subunit. Forms a bridge to the 30S subunit in the 70S ribosome.

Its function is as follows. One of the primary rRNA binding proteins. Required for association of the 30S and 50S subunits to form the 70S ribosome, for tRNA binding and peptide bond formation. It has been suggested to have peptidyltransferase activity; this is somewhat controversial. Makes several contacts with the 16S rRNA in the 70S ribosome. This Thermodesulfovibrio yellowstonii (strain ATCC 51303 / DSM 11347 / YP87) protein is Large ribosomal subunit protein uL2.